The sequence spans 616 residues: tRNA 5-methylaminomethyl-2-thiouridine biosynthesis bifunctional protein MnmC (616 aa).

The interval 1-232 (MLRTIVPARL…KRHCMSARFA (232 aa)) is tRNA (mnm(5)s(2)U34)-methyltransferase. The interval 249–616 (IGGGVAGAAA…ARFAGNRKTA (368 aa)) is FAD-dependent cmnm(5)s(2)U34 oxidoreductase.

It in the N-terminal section; belongs to the methyltransferase superfamily. tRNA (mnm(5)s(2)U34)-methyltransferase family. The protein in the C-terminal section; belongs to the DAO family. Requires FAD as cofactor.

It localises to the cytoplasm. The enzyme catalyses 5-aminomethyl-2-thiouridine(34) in tRNA + S-adenosyl-L-methionine = 5-methylaminomethyl-2-thiouridine(34) in tRNA + S-adenosyl-L-homocysteine + H(+). Its function is as follows. Catalyzes the last two steps in the biosynthesis of 5-methylaminomethyl-2-thiouridine (mnm(5)s(2)U) at the wobble position (U34) in tRNA. Catalyzes the FAD-dependent demodification of cmnm(5)s(2)U34 to nm(5)s(2)U34, followed by the transfer of a methyl group from S-adenosyl-L-methionine to nm(5)s(2)U34, to form mnm(5)s(2)U34. The sequence is that of tRNA 5-methylaminomethyl-2-thiouridine biosynthesis bifunctional protein MnmC from Thiobacillus denitrificans (strain ATCC 25259 / T1).